Here is a 200-residue protein sequence, read N- to C-terminus: Large ribosomal subunit protein bL25 (200 aa).

The protein belongs to the bacterial ribosomal protein bL25 family. CTC subfamily. As to quaternary structure, part of the 50S ribosomal subunit; part of the 5S rRNA/L5/L18/L25 subcomplex. Contacts the 5S rRNA. Binds to the 5S rRNA independently of L5 and L18.

This is one of the proteins that binds to the 5S RNA in the ribosome where it forms part of the central protuberance. The sequence is that of Large ribosomal subunit protein bL25 from Pseudomonas fluorescens (strain Pf0-1).